A 701-amino-acid polypeptide reads, in one-letter code: MPREVPLERIRNIGIIAHIDAGKTTTTERILFYTGRTYKLGEVHEGTAVMDWMEQERERGITITAAATTAEWTVEGVPYRINIIDTPGHVDFTAEVERSLRVLDGGVVVFDAVAGVEPQSETVWRQADKYHVPRICFVNKMDRIGANFERTVEMIRERLGAKPVPIQFPIGSEDRFRGIVDLITNKAVLYVDDQGKREELDAIPTEIADEVERLRNEMIEAIAETDDELMLLYLEGEELSVEELRRALRKATIKGQLVPVLCGAALRNKGVQRLLDAIVHYLPSPVDIPPVRGTRPGQVAGDDGVEMITRPTSEDAPFTGLVFKIVSDPFVGKLAYFRVYSGKLETGSYVLNSTRNQRERIGRLLQMHANHREEIKEVYAGDIAAMVGPKQSYTGDTICDPNDPIVLESIRFPEPVIQLAIEPKTKADQDKMAVALSKLAEEDPTFRVFTDQETGQTIIAGMGELHLEVIVDRMRREYKVEANQGKPQVAYRESITVPADVDSKFVRQTGGKGQYGHVKLQVEPLERGKGFEFINAIVGGVIPREYIPAVEAGVKEAMASGVIAGYPVVDLKVTLYDGSYHEVDSSEMAFKIAASMGLKEAVRKGRPILLEPVMKVEIVTPEDFLGTVLGDINSRRGHVEGMEARGNAQVIRAYVPLASMFGYTTDLRSATQGRATSSMEFAYYQPLPEALAKEIVEKRRG.

Residues 8–286 (ERIRNIGIIA…AIVHYLPSPV (279 aa)) enclose the tr-type G domain. GTP contacts are provided by residues 17–24 (AHIDAGKT), 85–89 (DTPGH), and 139–142 (NKMD).

This sequence belongs to the TRAFAC class translation factor GTPase superfamily. Classic translation factor GTPase family. EF-G/EF-2 subfamily.

It is found in the cytoplasm. Catalyzes the GTP-dependent ribosomal translocation step during translation elongation. During this step, the ribosome changes from the pre-translocational (PRE) to the post-translocational (POST) state as the newly formed A-site-bound peptidyl-tRNA and P-site-bound deacylated tRNA move to the P and E sites, respectively. Catalyzes the coordinated movement of the two tRNA molecules, the mRNA and conformational changes in the ribosome. The protein is Elongation factor G of Roseiflexus sp. (strain RS-1).